The following is a 263-amino-acid chain: Eukaryotic translation initiation factor 3 subunit J-B (263 aa).

Positions 1-13 are enriched in low complexity; sequence MAAAAAAAAAAAA. Residues 1–115 form a disordered region; it reads MAAAAAAAAA…EPEESKVLTP (115 aa). At alanine 2 the chain carries N-acetylalanine. Residues 6-74 form a sufficient for interaction with EIF3B region; the sequence is AAAAAAAAGD…KEEAEVKPEV (69 aa). A phosphoserine mark is found at serine 16, serine 18, and serine 25. Residues 45-66 are compositionally biased toward acidic residues; sequence EGEDEDEDVKDNWDDDDDENKE. Over residues 67 to 111 the composition is skewed to basic and acidic residues; the sequence is EAEVKPEVKISEKKKIAEKIKEKERQQKKRQEEIKKRLEEPEESK. Positions 75–140 form a coiled coil; that stretch reads KISEKKKIAE…ESDLELAKET (66 aa). A Glycyl lysine isopeptide (Lys-Gly) (interchain with G-Cter in SUMO2) cross-link involves residue lysine 111. A Phosphothreonine modification is found at threonine 114. Phosphoserine is present on serine 132. The tract at residues 248 to 263 is promotes stable association with the 40S ribosome; the sequence is YGGYEGGYVQDYEDFM. Tyrosine 259 carries the post-translational modification Phosphotyrosine.

It belongs to the eIF-3 subunit J family. As to quaternary structure, component of the eukaryotic translation initiation factor 3 (eIF-3) complex, which is composed of 13 subunits: EIF3A, EIF3B, EIF3C, EIF3D, EIF3E, EIF3F, EIF3G, EIF3H, EIF3I, EIF3J, EIF3K, EIF3L and EIF3M. The eIF-3 complex appears to include 3 stable modules: module A is composed of EIF3A, EIF3B, EIF3G and EIF3I; module B is composed of EIF3F, EIF3H, and EIF3M; and module C is composed of EIF3C, EIF3D, EIF3E, EIF3K and EIF3L. EIF3C of module C binds EIF3B of module A and EIF3H of module B, thereby linking the three modules. EIF3J is a labile subunit that binds to the eIF-3 complex via EIF3B. The eIF-3 complex interacts with RPS6KB1 under conditions of nutrient depletion. Mitogenic stimulation leads to binding and activation of a complex composed of MTOR and RPTOR, leading to phosphorylation and release of RPS6KB1 and binding of EIF4B to eIF-3. Post-translationally, phosphorylated. Phosphorylation is enhanced upon serum stimulation.

Its subcellular location is the cytoplasm. Its function is as follows. Component of the eukaryotic translation initiation factor 3 (eIF-3) complex, which is required for several steps in the initiation of protein synthesis. The eIF-3 complex associates with the 40S ribosome and facilitates the recruitment of eIF-1, eIF-1A, eIF-2:GTP:methionyl-tRNAi and eIF-5 to form the 43S pre-initiation complex (43S PIC). The eIF-3 complex stimulates mRNA recruitment to the 43S PIC and scanning of the mRNA for AUG recognition. The eIF-3 complex is also required for disassembly and recycling of post-termination ribosomal complexes and subsequently prevents premature joining of the 40S and 60S ribosomal subunits prior to initiation. The eIF-3 complex specifically targets and initiates translation of a subset of mRNAs involved in cell proliferation, including cell cycling, differentiation and apoptosis, and uses different modes of RNA stem-loop binding to exert either translational activation or repression. This subunit binds directly within the mRNA entry channel of the 40S ribosome to the aminoacyl (A) site. It may regulate the interaction between the 43S PIC and mRNA. This chain is Eukaryotic translation initiation factor 3 subunit J-B (Eif3j2), found in Mus musculus (Mouse).